Here is a 266-residue protein sequence, read N- to C-terminus: Luciferase (266 aa).

A helical membrane pass occupies residues 22–41 (GLATACCAVAVASAIAFPYI).

It belongs to the fungal luciferase family.

Its subcellular location is the membrane. The enzyme catalyses 3-hydroxyhispidin + O2 = (E)-caffeoylpyruvate + hnu + CO2. It catalyses the reaction 3-hydroxyhispidin + O2 = 4-[(E)-2-(3,4-dihydroxyphenyl)ethenyl]-1,7-dihydroxy-2,3,5-trioxabicyclo[2.2.2]oct-7-en-6-one. In terms of biological role, luciferase; part of the gene cluster that mediates the fungal bioluminescence cycle. Uses the fungal luciferin 3-hydroxyhispidin as a substrate to produce an endoperoxide as a high-energy intermediate with decomposition that yields oxyluciferin (also known as caffeoylpyruvate) and light emission. The fungal bioluminescence cycle begins with the hispidin synthetase that catalyzes the formation of hispidin which is further hydroxylated by the hispidin-3-hydroxylase, yielding the fungal luciferin 3-hydroxyhispidin. The luciferase then produces an endoperoxide as a high-energy intermediate with decomposition that yields oxyluciferin and light emission. Oxyluciferin can be recycled to caffeic acid by caffeoylpyruvate hydrolase. The chain is Luciferase from Armillaria ostoyae (Armillaria root rot fungus).